Reading from the N-terminus, the 338-residue chain is tRNA dimethylallyltransferase (338 aa).

13 to 20 serves as a coordination point for ATP; it reads GPTASGKT. 15–20 provides a ligand contact to substrate; the sequence is TASGKT. Interaction with substrate tRNA regions lie at residues 38 to 41 and 162 to 166; these read DSTL and QRVSR.

It belongs to the IPP transferase family. Monomer. It depends on Mg(2+) as a cofactor.

The catalysed reaction is adenosine(37) in tRNA + dimethylallyl diphosphate = N(6)-dimethylallyladenosine(37) in tRNA + diphosphate. In terms of biological role, catalyzes the transfer of a dimethylallyl group onto the adenine at position 37 in tRNAs that read codons beginning with uridine, leading to the formation of N6-(dimethylallyl)adenosine (i(6)A). This chain is tRNA dimethylallyltransferase, found in Cellvibrio japonicus (strain Ueda107) (Pseudomonas fluorescens subsp. cellulosa).